Consider the following 149-residue polypeptide: MABWDKVNSVWSAVEQNITAIGQNILLRLFEQYPESEDYFPKLKNKSLGELKDTADIKAQADTVLRALGNIVKKKGDHSQPVKALAATHITTHKIPPHYFTKITTIAVGVLSEMYPSEMNAQAQAAFSGAFKNICSDIEKEYKAANFQG.

A2 bears the N-acetylalanine mark. Residues 2–143 (ABWDKVNSVW…ICSDIEKEYK (142 aa)) form the Globin domain. H89 lines the heme b pocket.

This sequence belongs to the globin family. In terms of assembly, monomeric.

Its subcellular location is the cytoplasm. The protein localises to the sarcoplasm. It carries out the reaction Fe(III)-heme b-[protein] + nitric oxide + H2O = Fe(II)-heme b-[protein] + nitrite + 2 H(+). It catalyses the reaction H2O2 + AH2 = A + 2 H2O. Monomeric heme protein which primary function is to store oxygen and facilitate its diffusion within muscle tissues. Reversibly binds oxygen through a pentacoordinated heme iron and enables its timely and efficient release as needed during periods of heightened demand. Depending on the oxidative conditions of tissues and cells, and in addition to its ability to bind oxygen, it also has a nitrite reductase activity whereby it regulates the production of bioactive nitric oxide. Under stress conditions, like hypoxia and anoxia, it also protects cells against reactive oxygen species thanks to its pseudoperoxidase activity. This is Myoglobin (mb) from Hemitriakis japanica (Japanese topeshark).